The chain runs to 156 residues: Transcription inhibitor protein Gfh1 (156 aa).

The stretch at 1–74 (MAREVKLTKA…LEDILSRAVI (74 aa)) forms a coiled coil.

The protein belongs to the GreA/GreB family. Interacts with RNAP.

In terms of biological role, inhibits all catalytic activities of RNA polymerase (RNAP) by partially occluding its substrate-binding site and preventing NTP binding. This chain is Transcription inhibitor protein Gfh1 (gfh1), found in Thermus thermophilus (strain ATCC BAA-163 / DSM 7039 / HB27).